Reading from the N-terminus, the 287-residue chain is GDT1-like protein C17G8.08c (287 aa).

A run of 7 helical transmembrane segments spans residues Trp-7–Met-27, Leu-50–Ala-70, Ala-89–Pro-109, Leu-112–Ala-132, Val-194–Glu-214, Val-232–Ile-252, and Met-267–Phe-287.

It belongs to the GDT1 family.

Its subcellular location is the membrane. The chain is GDT1-like protein C17G8.08c from Schizosaccharomyces pombe (strain 972 / ATCC 24843) (Fission yeast).